Consider the following 373-residue polypeptide: Peptidoglycan recognition protein 4 (373 aa).

The first 17 residues, 1 to 17, serve as a signal peptide directing secretion; the sequence is MLPWLLVFSALGIQAWG. Residues N22, N39, N109, N145, and N247 are each glycosylated (N-linked (GlcNAc...) asparagine). 2 consecutive N-acetylmuramoyl-L-alanine amidase domains span residues 74 to 212 and 235 to 358; these read TPVN…ACPG and YGII…LSPG. Disulfide bonds link C210-C332, C226-C270, and C246-C252. Peptidoglycan is bound by residues Y263 and Y274. Interaction with murein regions lie at residues 293 to 302 and 353 to 354; these read QGSSTPGYDD and RT.

It belongs to the N-acetylmuramoyl-L-alanine amidase 2 family. Homodimer; disulfide-linked. Heterodimer with PGLYRP3; disulfide-linked. N-glycosylated. In terms of tissue distribution, detected in skin epidermis, eccrine sweat glands and ducts, mucous cells in the submandibular salivary gland, mucous cells in the throat, ciliary body epithelial cells of the eye, small intestine, colon, stomach and in mature epithelial cells of the tongue (at protein level). High expression in skin and esophagus. Expressed also to a much lesser extent in the tonsils and thymus.

The protein resides in the secreted. Pattern receptor that binds to murein peptidoglycans (PGN) of Gram-positive bacteria. Has bactericidal activity towards Gram-positive bacteria. May kill Gram-positive bacteria by interfering with peptidoglycan biosynthesis. Also binds to Gram-negative bacteria, and has bacteriostatic activity towards Gram-negative bacteria. Plays a role in innate immunity. This is Peptidoglycan recognition protein 4 (PGLYRP4) from Homo sapiens (Human).